Reading from the N-terminus, the 328-residue chain is GMP reductase (328 aa).

Cys-174 (thioimidate intermediate) is an active-site residue. 203 to 226 (IIADGGIRTHGDIAKSIRFGASMV) is a binding site for NADP(+).

Belongs to the IMPDH/GMPR family. GuaC type 2 subfamily.

It carries out the reaction IMP + NH4(+) + NADP(+) = GMP + NADPH + 2 H(+). Catalyzes the irreversible NADPH-dependent deamination of GMP to IMP. It functions in the conversion of nucleobase, nucleoside and nucleotide derivatives of G to A nucleotides, and in maintaining the intracellular balance of A and G nucleotides. In Staphylococcus saprophyticus subsp. saprophyticus (strain ATCC 15305 / DSM 20229 / NCIMB 8711 / NCTC 7292 / S-41), this protein is GMP reductase.